The following is a 1187-amino-acid chain: DNA excision repair protein CSB (1187 aa).

Polar residues predominate over residues 31-43 (QATTDPADSSGPT). Disordered regions lie at residues 31 to 53 (QATTDPADSSGPTINGGHQPDDA), 75 to 102 (IKGAKLKQPSGNKPHEHKGKDQPDHHGA), 217 to 242 (KRVELPEPSHRQDDSAGQTEEAMEAS), and 265 to 351 (DSES…EGSD). 2 stretches are compositionally biased toward basic and acidic residues: residues 92–101 (KGKDQPDHHG) and 217–230 (KRVELPEPSHRQDD). Basic residues predominate over residues 300 to 319 (KRPRNKTKRPLPGKKWRKAN). A compositionally biased stretch (acidic residues) spans 339-351 (SDDDEDQVTEGSD). Positions 384–580 (WELHCQRAGG…WSLFDFVFPG (197 aa)) constitute a Helicase ATP-binding domain. 397 to 404 (DEMGLGKT) contacts ATP. The interval 457–480 (SSSKKSKRSSDSDSEASWDSDQEE) is disordered. Acidic residues predominate over residues 468–480 (SDSEASWDSDQEE). A DEGH box motif is present at residues 531-534 (DEGH). Residues 716-876 (KVVEQVLKVW…RRFFKARDMK (161 aa)) form the Helicase C-terminal domain. Disordered regions lie at residues 916-945 (LYAASATPTTSGTEPSSSRHGQGKEDHCPD) and 1095-1116 (GSASNHTSSSSGNGRASSSSTR). Low complexity predominate over residues 918–933 (AASATPTTSGTEPSSS).

It belongs to the SNF2/RAD54 helicase family. In terms of assembly, homodimer. Binds DNA. As to expression, expressed in proliferating tissues. Highly expressed in shoot apical meristem (SAM). Expressed in roots, young leaves, flag leaves, and panicles. Expressed at very low levels in mature leaves.

Its subcellular location is the nucleus. In terms of biological role, essential factor involved in transcription-coupled nucleotide excision repair (TCR) which allows RNA polymerase II-blocking lesions to be rapidly removed from the transcribed strand of active genes. Upon DNA-binding, it locally modifies DNA conformation by wrapping the DNA around itself, thereby modifying the interface between stalled RNA polymerase II and DNA. It is required for transcription-coupled repair complex formation. The polypeptide is DNA excision repair protein CSB (Oryza sativa subsp. japonica (Rice)).